An 89-amino-acid chain; its full sequence is DNA-directed RNA polymerase subunit Rpo6 (89 aa).

It belongs to the archaeal Rpo6/eukaryotic RPB6 RNA polymerase subunit family. Part of the RNA polymerase complex.

It is found in the cytoplasm. The enzyme catalyses RNA(n) + a ribonucleoside 5'-triphosphate = RNA(n+1) + diphosphate. In terms of biological role, DNA-dependent RNA polymerase (RNAP) catalyzes the transcription of DNA into RNA using the four ribonucleoside triphosphates as substrates. The chain is DNA-directed RNA polymerase subunit Rpo6 from Aeropyrum pernix (strain ATCC 700893 / DSM 11879 / JCM 9820 / NBRC 100138 / K1).